A 469-amino-acid polypeptide reads, in one-letter code: Glutamate--tRNA ligase (469 aa).

Positions 11-21 match the 'HIGH' region motif; that stretch reads PSPTGFIHLGN. A 'KMSKS' region motif is present at residues 243 to 247; the sequence is KMSKR. Residue Lys246 coordinates ATP.

The protein belongs to the class-I aminoacyl-tRNA synthetase family. Glutamate--tRNA ligase type 1 subfamily. As to quaternary structure, monomer.

It is found in the cytoplasm. It carries out the reaction tRNA(Glu) + L-glutamate + ATP = L-glutamyl-tRNA(Glu) + AMP + diphosphate. In terms of biological role, catalyzes the attachment of glutamate to tRNA(Glu) in a two-step reaction: glutamate is first activated by ATP to form Glu-AMP and then transferred to the acceptor end of tRNA(Glu). The sequence is that of Glutamate--tRNA ligase from Burkholderia cenocepacia (strain ATCC BAA-245 / DSM 16553 / LMG 16656 / NCTC 13227 / J2315 / CF5610) (Burkholderia cepacia (strain J2315)).